The chain runs to 177 residues: Protein ParB (177 aa).

Residues Met1–Ala26 form the signal peptide. One can recognise a TNase-like domain in the interval Glu27–Asp157. Active-site residues include Arg53, Glu61, and Arg95.

Monomer. The cofactor is Ca(2+). In terms of processing, the N-terminus is blocked.

The protein localises to the secreted. With respect to regulation, endonuclease activity is inhibited by EDTA. Functionally, involved in plasmid partition. An endonuclease that acts on supercoiled dsDNA, converting it first to open circular DNA and then linearizing it. Preferentially cleaves regions in dsDNA that are capable of forming ssDNA, such as AT-rich regions and sequences that can form cruciforms. Has poor endonucleolytic activity on linear DNA, has 5'-3' exonuclease activity on dsDNA cleaving generating 3'-phosphonucleotides. The polypeptide is Protein ParB (Escherichia coli).